Here is an 82-residue protein sequence, read N- to C-terminus: Small ribosomal subunit protein bS16 (82 aa).

Belongs to the bacterial ribosomal protein bS16 family.

This is Small ribosomal subunit protein bS16 from Microcystis aeruginosa (strain NIES-843 / IAM M-2473).